We begin with the raw amino-acid sequence, 569 residues long: Proline--tRNA ligase (569 aa).

It belongs to the class-II aminoacyl-tRNA synthetase family. ProS type 1 subfamily. In terms of assembly, homodimer.

Its subcellular location is the cytoplasm. It catalyses the reaction tRNA(Pro) + L-proline + ATP = L-prolyl-tRNA(Pro) + AMP + diphosphate. Functionally, catalyzes the attachment of proline to tRNA(Pro) in a two-step reaction: proline is first activated by ATP to form Pro-AMP and then transferred to the acceptor end of tRNA(Pro). As ProRS can inadvertently accommodate and process non-cognate amino acids such as alanine and cysteine, to avoid such errors it has two additional distinct editing activities against alanine. One activity is designated as 'pretransfer' editing and involves the tRNA(Pro)-independent hydrolysis of activated Ala-AMP. The other activity is designated 'posttransfer' editing and involves deacylation of mischarged Ala-tRNA(Pro). The misacylated Cys-tRNA(Pro) is not edited by ProRS. The polypeptide is Proline--tRNA ligase (Shewanella woodyi (strain ATCC 51908 / MS32)).